We begin with the raw amino-acid sequence, 499 residues long: Probable mitochondrial-processing peptidase subunit alpha-2, chloroplastic/mitochondrial (499 aa).

It belongs to the peptidase M16 family. In terms of assembly, heterodimer of alpha and beta subunits, forming the mitochondrial processing protease (MPP) in which subunit alpha is involved in substrate recognition and binding and subunit beta is the catalytic subunit. Component of the ubiquinol-cytochrome c oxidoreductase (cytochrome b-c1 complex, complex III, CIII), a multisubunit enzyme composed of 10 subunits. The complex is composed of 3 respiratory subunits cytochrome b (MT-CYB), cytochrome c1 (CYC1-1 or CYC1-2) and Rieske protein (UCR1-1 or UCR1-2), 2 core protein subunits MPPalpha1 (or MPPalpha2) and MPPB, and 5 low-molecular weight protein subunits QCR7-1 (or QCR7-2), UCRQ-1 (or UCRQ-2), QCR9, UCRY and probably QCR6-1 (or QCR6-2). The complex exists as an obligatory dimer and forms supercomplexes (SCs) in the inner mitochondrial membrane with NADH-ubiquinone oxidoreductase (complex I, CI), resulting in different assemblies (supercomplexes SCI(1)III(2) and SCI(2)III(4)). Interacts with TIM23-2.

It localises to the plastid. The protein localises to the chloroplast stroma. Its subcellular location is the mitochondrion matrix. The protein resides in the mitochondrion inner membrane. Functionally, substrate recognition and binding subunit of the essential mitochondrial processing protease (MPP), which cleaves the mitochondrial sequence off newly imported precursors proteins. Component of the ubiquinol-cytochrome c oxidoreductase, a multisubunit transmembrane complex that is part of the mitochondrial electron transport chain which drives oxidative phosphorylation. The respiratory chain contains 3 multisubunit complexes succinate dehydrogenase (complex II, CII), ubiquinol-cytochrome c oxidoreductase (cytochrome b-c1 complex, complex III, CIII) and cytochrome c oxidase (complex IV, CIV), that cooperate to transfer electrons derived from NADH and succinate to molecular oxygen, creating an electrochemical gradient over the inner membrane that drives transmembrane transport and the ATP synthase. The cytochrome b-c1 complex catalyzes electron transfer from ubiquinol to cytochrome c, linking this redox reaction to translocation of protons across the mitochondrial inner membrane, with protons being carried across the membrane as hydrogens on the quinol. In the process called Q cycle, 2 protons are consumed from the matrix, 4 protons are released into the intermembrane space and 2 electrons are passed to cytochrome c. The protein is Probable mitochondrial-processing peptidase subunit alpha-2, chloroplastic/mitochondrial (MPPalpha2) of Arabidopsis thaliana (Mouse-ear cress).